We begin with the raw amino-acid sequence, 34 residues long: Potassium channel toxin alpha-KTx 6.3 (34 aa).

Intrachain disulfides connect Cys3-Cys24, Cys9-Cys29, Cys13-Cys31, and Cys19-Cys34. Cys34 bears the Cysteine amide mark.

This sequence belongs to the short scorpion toxin superfamily. Potassium channel inhibitor family. Alpha-KTx 06 subfamily. Amidated. The amidated toxin shows 5-fold more affinity for Kv1.3/KCNA3 than the synthetic carboxylated form. Expressed by the venom gland.

Its subcellular location is the secreted. In terms of biological role, potently blocks voltage-gated potassium channels Kv1.1/KCNA1 (IC(50)=7-11 nM) and Kv1.3/KCNA3 (IC(50)=11-29 pM). Also mildly blocks intermediate (IK) conductance calcium-activated potassium channels (KCa3.1/KCNN4) and ERG1/Kv11.1/KCNH2. Shows ability to suppress proliferation of lymphocytes, which are known to be sensitive to Kv1.3/KCNA3 homotetrameric channel block. The sequence is that of Potassium channel toxin alpha-KTx 6.3 from Heterometrus spinifer (Asia giant forest scorpion).